Reading from the N-terminus, the 372-residue chain is N-methyl-L-tryptophan oxidase (372 aa).

An FAD-binding site is contributed by Asp-4–His-34. Position 307 is an S-8alpha-FAD cysteine (Cys-307).

Belongs to the MSOX/MTOX family. MTOX subfamily. As to quaternary structure, monomer. Requires FAD as cofactor.

The enzyme catalyses N(alpha)-methyl-L-tryptophan + O2 + H2O = L-tryptophan + formaldehyde + H2O2. In terms of biological role, catalyzes the oxidative demethylation of N-methyl-L-tryptophan. The protein is N-methyl-L-tryptophan oxidase of Salmonella typhimurium (strain LT2 / SGSC1412 / ATCC 700720).